A 204-amino-acid polypeptide reads, in one-letter code: MSKVVVLNDKLEKAGELDLPSKYAEVNPHNLYLYVKSYLASLRANTAHTKGRSDVSGGGKKPWRQKGRGGARAGSTRTNVWVGGAVAFGPTNERNYFQKVNKKQKRLALERALADKAAKGVLFTADSLAIESGKTKDANAVIKKLGVKDALIVKDLLDEKTLLAYRNLANCYVVDVTEVNAYLVSVFNAVIMEKSALESITKEG.

Positions 49–75 are disordered; sequence TKGRSDVSGGGKKPWRQKGRGGARAGS.

Belongs to the universal ribosomal protein uL4 family. Part of the 50S ribosomal subunit.

In terms of biological role, one of the primary rRNA binding proteins, this protein initially binds near the 5'-end of the 23S rRNA. It is important during the early stages of 50S assembly. It makes multiple contacts with different domains of the 23S rRNA in the assembled 50S subunit and ribosome. Functionally, forms part of the polypeptide exit tunnel. The sequence is that of Large ribosomal subunit protein uL4 from Campylobacter jejuni (strain RM1221).